Reading from the N-terminus, the 123-residue chain is Large ribosomal subunit protein bL12 (123 aa).

This sequence belongs to the bacterial ribosomal protein bL12 family. In terms of assembly, homodimer. Part of the ribosomal stalk of the 50S ribosomal subunit. Forms a multimeric L10(L12)X complex, where L10 forms an elongated spine to which 2 to 4 L12 dimers bind in a sequential fashion. Binds GTP-bound translation factors.

Its function is as follows. Forms part of the ribosomal stalk which helps the ribosome interact with GTP-bound translation factors. Is thus essential for accurate translation. This Salmonella arizonae (strain ATCC BAA-731 / CDC346-86 / RSK2980) protein is Large ribosomal subunit protein bL12.